Consider the following 787-residue polypeptide: Filamentous growth regulator 27 (787 aa).

The interval 1-22 (MSAPIVETKKASKRRIRRIPDD) is disordered. Positions 31–57 (CDNCKKRKFKCSGEKPCFECSKKGHDC) form a DNA-binding region, zn(2)-C6 fungal-type. Residues 69-97 (GERMAKLKQKKDNNEKQRELVNEQIAQSS) are a coiled coil. Disordered regions lie at residues 120–140 (SSHS…SSIP) and 200–221 (RHKS…KGGI). Polar residues predominate over residues 209-221 (DNNTNNVPKKGGI).

Its subcellular location is the nucleus. Its function is as follows. Transcription factor involved in yeast cell adherence to silicone substrate, filamentous growth, and biofilm formation. In Candida albicans (strain SC5314 / ATCC MYA-2876) (Yeast), this protein is Filamentous growth regulator 27 (FGR27).